A 136-amino-acid polypeptide reads, in one-letter code: Histone H3 (136 aa).

The interval 1 to 43 (MARTKQTARKSTGGKAPRKQLATKAARKSAPATGGVKKPHRYR) is disordered. Lysine 5 is modified (N6-methylated lysine). At lysine 10 the chain carries N6-acetyllysine; alternate. Lysine 10 bears the N6-methylated lysine; alternate mark. Serine 11 carries the phosphoserine modification. Lysine 15 and lysine 24 each carry N6-acetyllysine. Lysine 28, lysine 37, and lysine 80 each carry N6-methylated lysine.

Belongs to the histone H3 family. As to quaternary structure, the nucleosome is a histone octamer containing two molecules each of H2A, H2B, H3 and H4 assembled in one H3-H4 heterotetramer and two H2A-H2B heterodimers. The octamer wraps approximately 147 bp of DNA. In terms of processing, acetylation is generally linked to gene activation. Methylation at Lys-5 is linked to gene activation. Methylation at Lys-10 is linked to gene repression.

The protein localises to the nucleus. It is found in the chromosome. Core component of nucleosome. Nucleosomes wrap and compact DNA into chromatin, limiting DNA accessibility to the cellular machineries which require DNA as a template. Histones thereby play a central role in transcription regulation, DNA repair, DNA replication and chromosomal stability. DNA accessibility is regulated via a complex set of post-translational modifications of histones, also called histone code, and nucleosome remodeling. The protein is Histone H3 of Platynereis dumerilii (Dumeril's clam worm).